Reading from the N-terminus, the 289-residue chain is MKKLSFQQIILILQNYWQDYGCAILQPYDAHVGAGTFHPATVLRCLGTKPWFVAYVQPSRRPCDSRYGMHPNRMQHYYQFQVILKPSPDNIQDLYLKSLECLNLDLKTHDIRFVEDDWESPTLGASGLGWEVWCDGMEVSQFTYMQQVGGIECYPVACEITYGLERLALYIQGIDEVKELDWNGQIGEKALKYGEVDFEAERQFSKYNLEFADSEMLLRHFKDSGEQCERLVNVNLPMPAYDECLKASHYFNQLNALGVISVTERASYILRVRYLAKICCIKWLELSSE.

This sequence belongs to the class-II aminoacyl-tRNA synthetase family. Tetramer of two alpha and two beta subunits.

It localises to the cytoplasm. The enzyme catalyses tRNA(Gly) + glycine + ATP = glycyl-tRNA(Gly) + AMP + diphosphate. In Rickettsia typhi (strain ATCC VR-144 / Wilmington), this protein is Glycine--tRNA ligase alpha subunit.